Reading from the N-terminus, the 281-residue chain is MEMO1 family protein PAE0818 (281 aa).

Belongs to the MEMO1 family.

This is MEMO1 family protein PAE0818 from Pyrobaculum aerophilum (strain ATCC 51768 / DSM 7523 / JCM 9630 / CIP 104966 / NBRC 100827 / IM2).